The chain runs to 395 residues: Chorismate synthase (395 aa).

Residues Arg40 and Arg46 each contribute to the NADP(+) site. FMN is bound by residues 135–137 (RAS) and 256–257 (QA). Basic and acidic residues predominate over residues 272–283 (RRGSQAHDEMRP). Residues 272–296 (RRGSQAHDEMRPGPDGILRSTNRAG) are disordered. FMN is bound by residues Gly300, 315–319 (KPIST), and Arg341.

This sequence belongs to the chorismate synthase family. In terms of assembly, homotetramer. FMNH2 serves as cofactor.

It catalyses the reaction 5-O-(1-carboxyvinyl)-3-phosphoshikimate = chorismate + phosphate. The protein operates within metabolic intermediate biosynthesis; chorismate biosynthesis; chorismate from D-erythrose 4-phosphate and phosphoenolpyruvate: step 7/7. In terms of biological role, catalyzes the anti-1,4-elimination of the C-3 phosphate and the C-6 proR hydrogen from 5-enolpyruvylshikimate-3-phosphate (EPSP) to yield chorismate, which is the branch point compound that serves as the starting substrate for the three terminal pathways of aromatic amino acid biosynthesis. This reaction introduces a second double bond into the aromatic ring system. This is Chorismate synthase from Rhodococcus opacus (strain B4).